A 301-amino-acid polypeptide reads, in one-letter code: Acetylglutamate kinase (301 aa).

Substrate-binding positions include 68–69 (GG), Arg90, and Asn195.

It belongs to the acetylglutamate kinase family. ArgB subfamily.

Its subcellular location is the cytoplasm. The catalysed reaction is N-acetyl-L-glutamate + ATP = N-acetyl-L-glutamyl 5-phosphate + ADP. It functions in the pathway amino-acid biosynthesis; L-arginine biosynthesis; N(2)-acetyl-L-ornithine from L-glutamate: step 2/4. In terms of biological role, catalyzes the ATP-dependent phosphorylation of N-acetyl-L-glutamate. This Pseudomonas fluorescens (strain ATCC BAA-477 / NRRL B-23932 / Pf-5) protein is Acetylglutamate kinase.